The primary structure comprises 492 residues: Dipeptide and tripeptide permease A (492 aa).

The Cytoplasmic portion of the chain corresponds to 1 to 20 (MSTANKHPEAASLNAFKQPR). The chain crosses the membrane as a helical span at residues 21–43 (SFYLIFSIELWERFGYYGLQGIM). Residues 44 to 58 (AVYLVKMLGMSEAQS) are Periplasmic-facing. Residues 59–79 (ITLFASFSALVYGLIAVGGWL) form a helical membrane-spanning segment. Topologically, residues 80–88 (GDKVLGTKR) are cytoplasmic. A helical transmembrane segment spans residues 89–109 (VIVLGTLVLALGYALVAWSGH). Aspartate 110 is a topological domain (periplasmic). The helical transmembrane segment at 111-131 (IAMIYFGMATIAVGNGLFKAN) threads the bilayer. The Cytoplasmic segment spans residues 132 to 152 (PSSLLSTCYEKDDPRLDGAFT). Residues 153 to 173 (MYYMAINIGSFFSMLATPWLA) traverse the membrane as a helical segment. Residues 174-178 (AQFGW) are Periplasmic-facing. A helical membrane pass occupies residues 179–199 (STAFGLSFVGMLITLVNFMFF). At 200–217 (RKWVKDHGSKPDFAPLNM) the chain is on the cytoplasmic side. A helical membrane pass occupies residues 218 to 238 (GKLLVTLLGIAVMIAAATWLL). The Periplasmic portion of the chain corresponds to 239 to 245 (HNQDIAR). Residues 246 to 266 (MVLGAVAVAIVVIFTKEALTL) form a helical membrane-spanning segment. The Cytoplasmic segment spans residues 267 to 273 (KGAARRK). Residues 274–294 (MIVAFLLMLEAIVFFVLYMQM) traverse the membrane as a helical segment. The Periplasmic segment spans residues 295 to 319 (PTSLNFFAIRNVEHSLLGIAFQPEQ). A helical transmembrane segment spans residues 320–340 (FQALNPFWIMIFSPLLAALYN). The Cytoplasmic segment spans residues 341-351 (KLGDRMPMPHK). The chain crosses the membrane as a helical span at residues 352–372 (FALGMVLCSAAFLVLPLGASL). The Periplasmic segment spans residues 373–377 (ANKMG). The helical transmembrane segment at 378-398 (IVSVGWLVLSYALQSVGELMI) threads the bilayer. At 399-413 (SGLGLAMVAQLVPQR) the chain is on the cytoplasmic side. A helical transmembrane segment spans residues 414-434 (LMGFIMGSWFLTTAGAAMVAG). Topologically, residues 435-458 (KVANLMAVPENITNPLLSLHVYGD) are periplasmic. A helical membrane pass occupies residues 459–479 (IFFKIGITTGVIAVLMILAAP). Topologically, residues 480–492 (LLNRMTQDEQPGV) are cytoplasmic.

The protein belongs to the major facilitator superfamily. Proton-dependent oligopeptide transporter (POT/PTR) (TC 2.A.17) family. DtpA subfamily.

It is found in the cell inner membrane. Functionally, proton-dependent permease that transports di- and tripeptides. This is Dipeptide and tripeptide permease A from Erwinia pyrifoliae (strain DSM 12163 / CIP 106111 / Ep16/96).